The chain runs to 59 residues: MANTVKVKLVKGLIGTRETHRATVRGLGLRGINSVSELEDTPAVRGMINKVSYLVKVVS.

It belongs to the universal ribosomal protein uL30 family. As to quaternary structure, part of the 50S ribosomal subunit.

This is Large ribosomal subunit protein uL30 from Herminiimonas arsenicoxydans.